A 582-amino-acid polypeptide reads, in one-letter code: Probable DNA ligase (582 aa).

Residue Glu-243 coordinates ATP. Lys-245 (N6-AMP-lysine intermediate) is an active-site residue. Positions 250, 265, 295, 335, 410, and 416 each coordinate ATP.

Belongs to the ATP-dependent DNA ligase family. It depends on Mg(2+) as a cofactor.

The catalysed reaction is ATP + (deoxyribonucleotide)n-3'-hydroxyl + 5'-phospho-(deoxyribonucleotide)m = (deoxyribonucleotide)n+m + AMP + diphosphate.. Its function is as follows. DNA ligase that seals nicks in double-stranded DNA during DNA replication, DNA recombination and DNA repair. The chain is Probable DNA ligase from Dictyoglomus thermophilum (strain ATCC 35947 / DSM 3960 / H-6-12).